Here is a 356-residue protein sequence, read N- to C-terminus: Ribosomal RNA large subunit methyltransferase M (356 aa).

Residues S187, 220–223 (CPGG), D239, D259, and D276 contribute to the S-adenosyl-L-methionine site. K305 serves as the catalytic Proton acceptor.

This sequence belongs to the class I-like SAM-binding methyltransferase superfamily. RNA methyltransferase RlmE family. RlmM subfamily. In terms of assembly, monomer.

Its subcellular location is the cytoplasm. The catalysed reaction is cytidine(2498) in 23S rRNA + S-adenosyl-L-methionine = 2'-O-methylcytidine(2498) in 23S rRNA + S-adenosyl-L-homocysteine + H(+). In terms of biological role, catalyzes the 2'-O-methylation at nucleotide C2498 in 23S rRNA. The chain is Ribosomal RNA large subunit methyltransferase M from Pseudoalteromonas atlantica (strain T6c / ATCC BAA-1087).